A 520-amino-acid polypeptide reads, in one-letter code: Bifunctional purine biosynthesis protein PurH (520 aa).

The region spanning 1 to 150 is the MGS-like domain; that stretch reads MSDDRKAIKR…KNHPSVAVVV (150 aa).

This sequence belongs to the PurH family.

It carries out the reaction (6R)-10-formyltetrahydrofolate + 5-amino-1-(5-phospho-beta-D-ribosyl)imidazole-4-carboxamide = 5-formamido-1-(5-phospho-D-ribosyl)imidazole-4-carboxamide + (6S)-5,6,7,8-tetrahydrofolate. The catalysed reaction is IMP + H2O = 5-formamido-1-(5-phospho-D-ribosyl)imidazole-4-carboxamide. It functions in the pathway purine metabolism; IMP biosynthesis via de novo pathway; 5-formamido-1-(5-phospho-D-ribosyl)imidazole-4-carboxamide from 5-amino-1-(5-phospho-D-ribosyl)imidazole-4-carboxamide (10-formyl THF route): step 1/1. It participates in purine metabolism; IMP biosynthesis via de novo pathway; IMP from 5-formamido-1-(5-phospho-D-ribosyl)imidazole-4-carboxamide: step 1/1. The protein is Bifunctional purine biosynthesis protein PurH of Corynebacterium glutamicum (strain R).